Consider the following 176-residue polypeptide: Ribosome maturation factor RimM (176 aa).

The PRC barrel domain occupies 97-176 (EDEFYWRDLI…QILVDWDPDF (80 aa)).

It belongs to the RimM family. As to quaternary structure, binds ribosomal protein uS19.

It localises to the cytoplasm. Functionally, an accessory protein needed during the final step in the assembly of 30S ribosomal subunit, possibly for assembly of the head region. Essential for efficient processing of 16S rRNA. May be needed both before and after RbfA during the maturation of 16S rRNA. It has affinity for free ribosomal 30S subunits but not for 70S ribosomes. The chain is Ribosome maturation factor RimM from Shewanella halifaxensis (strain HAW-EB4).